The chain runs to 115 residues: uncharacterized protein (115 aa).

The region spanning 63–108 (GSPCGFEFREAITCQKTNSDGEIEQGACGKELMSFMECVTRTQCFG) is the CHCH domain. Short sequence motifs (cx9C motif) lie at residues 66–76 (CGFEFREAITC) and 90–100 (CGKELMSFMEC). Cystine bridges form between Cys66–Cys100 and Cys76–Cys90.

This is an uncharacterized protein from Caenorhabditis elegans.